A 747-amino-acid polypeptide reads, in one-letter code: Mitochondrial inner membrane i-AAA protease supercomplex subunit YME1 (747 aa).

Over residues 51 to 64 (KNSGEMPPKKEADS) the composition is skewed to basic and acidic residues. The segment at 51 to 92 (KNSGEMPPKKEADSSGKASNKSTISSIDNSQPPPPSNTNDKT) is disordered. Over residues 66–80 (GKASNKSTISSIDNS) the composition is skewed to polar residues. 321-328 (GPPGTGKT) lines the ATP pocket. H540 contributes to the Zn(2+) binding site. E541 is a catalytic residue. Zn(2+)-binding residues include H544 and D618. The tract at residues 718–747 (STNTVVEGPDSDERKDIGDDKPKIPTMLNA) is disordered. The segment covering 728–740 (SDERKDIGDDKPK) has biased composition (basic and acidic residues).

This sequence in the N-terminal section; belongs to the AAA ATPase family. It in the C-terminal section; belongs to the peptidase M41 family. In terms of assembly, component of the mitochondrial inner membrane i-AAA protease supercomplex composed of MGR1, MGR3 and YME1. Interacts directly with MGR1. The cofactor is Zn(2+).

It is found in the mitochondrion inner membrane. Functionally, catalytic subunit of the mitochondrial inner membrane i-AAA protease supercomplex required for mitochondrial inner membrane protein turnover. The protease is probably ATP-dependent. Important to maintain the integrity of the mitochondrial compartment. Required both for the degradation of unassembled subunit 2 of cytochrome c oxidase (COX2) and for efficient assembly of mitochondrial respiratory chain. Binds unfolded substrates in an ATPase-independent manner; binding of folded COX2, a physiological substrate, requires an active ATPase but when COX2 is destabilized an active ATPase is no longer necessary. May process ATG32. The protein is Mitochondrial inner membrane i-AAA protease supercomplex subunit YME1 (YME1) of Saccharomyces cerevisiae (strain ATCC 204508 / S288c) (Baker's yeast).